Consider the following 372-residue polypeptide: E3 ubiquitin-protein ligase RNF34 (372 aa).

The FYVE-type zinc-finger motif lies at 56-107; it reads EGPNIVCKACGLSFSVFRKKHVCCDCKKDFCSVCSVLQENLRRCSTCHLLQE. The SAP 1 domain maps to 115–134; that stretch reads LMRLKVKDLRQYLILRNIPI. Residue serine 169 is modified to Phosphoserine. Residues 194 to 253 are disordered; the sequence is QGELMDGDQTSRSGVPAQVQSEITSANTEDDDDDDDEDDDDEEENAEDRNPGLSKERVRA. A compositionally biased stretch (polar residues) spans 201–220; sequence DQTSRSGVPAQVQSEITSAN. Over residues 221-239 the composition is skewed to acidic residues; the sequence is TEDDDDDDDEDDDDEEENA. A compositionally biased stretch (basic and acidic residues) spans 240-252; it reads EDRNPGLSKERVR. A phosphoserine mark is found at serine 254 and serine 256. The region spanning 264–278 is the SAP 2 domain; that stretch reads VEGMSVRQLKEILAR. The RING-type zinc finger occupies 325-360; the sequence is CRICMDAVIDCVLLECGHMVTCTKCGKRMSECPICR.

Interacts with CASP8 and CASP10. Interacts (via RING-type zinc finger) with PPARGC1A. Interacts with NOD1. Interacts with p53/TP53; involved in p53/TP53 ubiquitination. Interacts (via RING-type zinc finger) with MDM2; the interaction stabilizes MDM2. In terms of processing, autoubiquitinated (in vitro). Proteolytically cleaved by caspases upon induction of apoptosis by TNF. As to expression, ubiquitous. Detected in heart, brain, liver, skeletal muscle, kidney, pancreas, spleen, thymus, prostate, testis, ovary, colon and leukocytes.

It is found in the cell membrane. The protein localises to the endomembrane system. The protein resides in the nucleus. It localises to the nucleus speckle. Its subcellular location is the cytoplasm. It is found in the cytosol. The catalysed reaction is S-ubiquitinyl-[E2 ubiquitin-conjugating enzyme]-L-cysteine + [acceptor protein]-L-lysine = [E2 ubiquitin-conjugating enzyme]-L-cysteine + N(6)-ubiquitinyl-[acceptor protein]-L-lysine.. It functions in the pathway protein modification; protein ubiquitination. E3 ubiquitin-protein ligase that regulates several biological processes through the ubiquitin-mediated proteasomal degradation of various target proteins. Ubiquitinates the caspases CASP8 and CASP10, promoting their proteasomal degradation, to negatively regulate cell death downstream of death domain receptors in the extrinsic pathway of apoptosis. May mediate 'Lys-48'-linked polyubiquitination of RIPK1 and its subsequent proteasomal degradation thereby indirectly regulating the tumor necrosis factor-mediated signaling pathway. Negatively regulates p53/TP53 through its direct ubiquitination and targeting to proteasomal degradation. Indirectly, may also negatively regulate p53/TP53 through ubiquitination and degradation of SFN. Mediates PPARGC1A proteasomal degradation probably through ubiquitination thereby indirectly regulating the metabolism of brown fat cells. Possibly involved in innate immunity, through 'Lys-48'-linked polyubiquitination of NOD1 and its subsequent proteasomal degradation. The protein is E3 ubiquitin-protein ligase RNF34 of Homo sapiens (Human).